Reading from the N-terminus, the 126-residue chain is Small ribosomal subunit protein uS12m (126 aa).

Residues 1-11 (MATSNQMGANT) are compositionally biased toward polar residues. The segment at 1 to 21 (MATSNQMGANTRSKKKKKNLK) is disordered. Residues 12-21 (RSKKKKKNLK) are compositionally biased toward basic residues.

This sequence belongs to the universal ribosomal protein uS12 family.

The protein resides in the mitochondrion. Functionally, protein S12 is involved in the translation initiation step. The sequence is that of Small ribosomal subunit protein uS12m (RPS12) from Bigelowiella natans (Pedinomonas minutissima).